Reading from the N-terminus, the 448-residue chain is Adenylosuccinate synthetase (448 aa).

GTP contacts are provided by residues 22–28 and 50–52; these read GDEGKGK and GHT. Aspartate 23 functions as the Proton acceptor in the catalytic mechanism. Mg(2+)-binding residues include aspartate 23 and glycine 50. IMP-binding positions include 23-26, 48-51, threonine 139, arginine 153, glutamine 234, threonine 249, and arginine 321; these read DEGK and NAGH. The Proton donor role is filled by histidine 51. Residue 317-323 coordinates substrate; that stretch reads SVTGRPR. GTP-binding positions include arginine 323, 349-351, and 431-433; these read KLD and STG.

Belongs to the adenylosuccinate synthetase family. In terms of assembly, homodimer. Requires Mg(2+) as cofactor.

The protein resides in the cytoplasm. It carries out the reaction IMP + L-aspartate + GTP = N(6)-(1,2-dicarboxyethyl)-AMP + GDP + phosphate + 2 H(+). The protein operates within purine metabolism; AMP biosynthesis via de novo pathway; AMP from IMP: step 1/2. Functionally, plays an important role in the de novo pathway of purine nucleotide biosynthesis. Catalyzes the first committed step in the biosynthesis of AMP from IMP. The chain is Adenylosuccinate synthetase from Burkholderia pseudomallei (strain 1106a).